We begin with the raw amino-acid sequence, 555 residues long: Esterase-5A (555 aa).

Residues 1-19 (MHLVRWLICLIQLWIQLGA) form the signal peptide. The cysteines at positions 87 and 106 are disulfide-linked. 2 N-linked (GlcNAc...) asparagine glycosylation sites follow: Asn-95 and Asn-116. Residue Ser-210 is the Acyl-ester intermediate of the active site. An intrachain disulfide couples Cys-262 to Cys-274. Residues Asn-479 and Asn-510 are each glycosylated (N-linked (GlcNAc...) asparagine). A disulfide bridge links Cys-518 with Cys-539.

It belongs to the type-B carboxylesterase/lipase family.

The protein localises to the secreted. The catalysed reaction is a carboxylic ester + H2O = an alcohol + a carboxylate + H(+). The protein is Esterase-5A (Est-5A) of Drosophila miranda (Fruit fly).